A 105-amino-acid polypeptide reads, in one-letter code: MNPSEMQRKAPPRRRRHRNRAPSSHKMNKMMMSEEQMKLPSTNKAEPLTWAQLNKLTQLATKCLENTKMTQTPESMLLAALMIVSTVSAGVPNSSEETVTIENGP.

A disordered region spans residues 1–41 (MNPSEMQRKAPPRRRRHRNRAPSSHKMNKMMMSEEQMKLPS). Basic residues predominate over residues 10 to 20 (APPRRRRHRNR). A Nuclear localization signal motif is present at residues 13-20 (RRRRHRNR). A Nuclear export signal motif is present at residues 50–59 (WAQLNKLTQL).

In terms of assembly, forms homodimers, homotrimers, and homotetramers via a C-terminal domain. Associates with XPO1 and with ZNF145.

Its subcellular location is the cytoplasm. The protein localises to the nucleus. It is found in the nucleolus. Functionally, retroviral replication requires the nuclear export and translation of unspliced, singly-spliced and multiply-spliced derivatives of the initial genomic transcript. Rec interacts with a highly structured RNA element (RcRE) present in the viral 3'LTR and recruits the cellular nuclear export machinery. This permits export to the cytoplasm of unspliced genomic or incompletely spliced subgenomic viral transcripts. The polypeptide is Endogenous retrovirus group K member 16 Rec protein (ERVK-16) (Homo sapiens (Human)).